The chain runs to 836 residues: Protein O-mannosyl-transferase TMTC2 (836 aa).

A helical transmembrane segment spans residues 1–21; it reads MIAELVSSALGLALYLNTLSA. Residues 22 to 77 lie on the Extracellular side of the membrane; it reads DFCYDDSRAIKTNQDLLPETPWTHIFYNDFWGTLLTHSGSHKSYRPLCTLSFRLNH. The chain crosses the membrane as a helical span at residues 78–98; the sequence is AIGGLNPWSYHLVNVLLHAAV. Topologically, residues 99 to 107 are cytoplasmic; sequence TGLFTRFSK. Residues 108 to 128 traverse the membrane as a helical segment; the sequence is ALLGDGYWTFMAGLMFASHPI. Over 129–132 the chain is Extracellular; sequence HTEA. The chain crosses the membrane as a helical span at residues 133-153; sequence VAGIVGRADVGASLFFLLSLL. Topologically, residues 154 to 168 are cytoplasmic; it reads CYIKHCSTRGYSART. Helical transmembrane passes span 169–184 and 185–204; these read WGWF…CSML and WKEQ…VFVF. Residues 205 to 220 are Cytoplasmic-facing; the sequence is HRLKMKQILPTIYKRK. Residues 221–241 form a helical membrane-spanning segment; it reads NLSLFLSISLLTFWGTCLLGA. Over 242-312 the chain is Extracellular; sequence RLYWMGNKPP…KTVCDWRNLH (71 aa). Residues 313–333 form a helical membrane-spanning segment; that stretch reads TVAFYSGLLLLAYCGLKNPSL. Residues 334–392 are Cytoplasmic-facing; sequence EGECNGKALTNGKQNANGHSCHSDVEYRNSEMKPSFASKVENGIKNCVPQRTQLPSTEN. Residues 393–415 form a helical membrane-spanning segment; it reads IVILSLSLLIIPFIPATNLFFYV. Over 416–422 the chain is Extracellular; that stretch reads GFVIAER. Residues 423–443 form a helical membrane-spanning segment; it reads VLYIPSMGFCLLITVGARALY. Over 444 to 449 the chain is Cytoplasmic; the sequence is VKVQKR. A helical transmembrane segment spans residues 450–470; that stretch reads FLKSLVFYATATLIVFYGVKT. At 471-836 the chain is on the extracellular side; that stretch reads AIRNGDWQNE…EKQGLKTSKT (366 aa). TPR repeat units lie at residues 493–526, 527–560, 561–594, 606–639, 643–676, 677–710, 711–744, 745–778, and 779–812; these read AKAW…RSNM, ADML…RPTL, ASAY…PDEN, TSCL…MPRH, QSLY…KTDH, IPAH…DPTK, GNCY…DNTE, FDVV…RPNY, and PAAL…KPDD.

The protein belongs to the TMTC family.

Its subcellular location is the membrane. It localises to the endoplasmic reticulum. It catalyses the reaction a di-trans,poly-cis-dolichyl beta-D-mannosyl phosphate + L-seryl-[protein] = 3-O-(alpha-D-mannosyl)-L-seryl-[protein] + a di-trans,poly-cis-dolichyl phosphate + H(+). It carries out the reaction a di-trans,poly-cis-dolichyl beta-D-mannosyl phosphate + L-threonyl-[protein] = 3-O-(alpha-D-mannosyl)-L-threonyl-[protein] + a di-trans,poly-cis-dolichyl phosphate + H(+). It participates in protein modification; protein glycosylation. Its function is as follows. Transfers mannosyl residues to the hydroxyl group of serine or threonine residues. The 4 members of the TMTC family are O-mannosyl-transferases dedicated primarily to the cadherin superfamily, each member seems to have a distinct role in decorating the cadherin domains with O-linked mannose glycans at specific regions. Also acts as O-mannosyl-transferase on other proteins such as PDIA3. This is Protein O-mannosyl-transferase TMTC2 from Mus musculus (Mouse).